The chain runs to 245 residues: MIIPALDLIDGTVVRLHQGDYARQRDYGNDPLPRLQDYAAQGAGVLHLVDLTGAKDPAKRQIPLIKTLVAGVNVPVQVGGGVRTEEDVAALLKAGVARVVIGSTAVKSPDVVKGWFERFGAQALVLALDVRIDEHGNKQVAVSGWQENSGVSLEQLVETYLPVGLKHVLCTDISRDGTLAGSNVSLYEEVCARYPQIAFQSSGGIGDIDDIAALRGTGVRGVIVGRALLEGKFTVKEAIQCWQNV.

D7 functions as the Proton acceptor in the catalytic mechanism. The active-site Proton donor is the D129.

The protein belongs to the HisA/HisF family.

It localises to the cytoplasm. The catalysed reaction is 1-(5-phospho-beta-D-ribosyl)-5-[(5-phospho-beta-D-ribosylamino)methylideneamino]imidazole-4-carboxamide = 5-[(5-phospho-1-deoxy-D-ribulos-1-ylimino)methylamino]-1-(5-phospho-beta-D-ribosyl)imidazole-4-carboxamide. It functions in the pathway amino-acid biosynthesis; L-histidine biosynthesis; L-histidine from 5-phospho-alpha-D-ribose 1-diphosphate: step 4/9. This is 1-(5-phosphoribosyl)-5-[(5-phosphoribosylamino)methylideneamino] imidazole-4-carboxamide isomerase from Salmonella dublin (strain CT_02021853).